The sequence spans 128 residues: MLGVLLVLHGSKIPEWKDVGIKYAEYLSRYFNLVEFGFLEFNKPTLSEALSNLLAKGANKIVVVPLLFATGTHFKRDIPRLLGIDGDEKKIQYMGKEIEIIIADPLGFDEKIGEVLVKGVNETYNKNY.

The active-site Proton acceptor is histidine 9. Residue histidine 9 participates in Co(2+) binding. Residues lysine 43 and 68 to 73 (FATGTH) each bind substrate. Histidine 73 provides a ligand contact to Co(2+).

The protein belongs to the CbiX family. CbiXS subfamily. As to quaternary structure, homotetramer; dimer of dimers.

The catalysed reaction is Co-sirohydrochlorin + 2 H(+) = sirohydrochlorin + Co(2+). It participates in cofactor biosynthesis; adenosylcobalamin biosynthesis; cob(II)yrinate a,c-diamide from sirohydrochlorin (anaerobic route): step 1/10. Functionally, catalyzes the insertion of Co(2+) into sirohydrochlorin as part of the anaerobic pathway to cobalamin biosynthesis. The sequence is that of Sirohydrochlorin cobaltochelatase from Saccharolobus islandicus (strain Y.G.57.14 / Yellowstone #1) (Sulfolobus islandicus).